We begin with the raw amino-acid sequence, 91 residues long: DNA-binding protein HU-beta 2 (91 aa).

The protein belongs to the bacterial histone-like protein family.

Its function is as follows. Histone-like DNA-binding protein which is capable of wrapping DNA to stabilize it, and thus to prevent its denaturation under extreme environmental conditions. The sequence is that of DNA-binding protein HU-beta 2 (hupB2) from Neisseria meningitidis serogroup A / serotype 4A (strain DSM 15465 / Z2491).